A 236-amino-acid chain; its full sequence is Endonuclease V (236 aa).

Mg(2+) contacts are provided by D47 and D115.

Belongs to the endonuclease V family. The cofactor is Mg(2+).

Its subcellular location is the cytoplasm. The enzyme catalyses Endonucleolytic cleavage at apurinic or apyrimidinic sites to products with a 5'-phosphate.. In terms of biological role, DNA repair enzyme involved in the repair of deaminated bases. Selectively cleaves double-stranded DNA at the second phosphodiester bond 3' to a deoxyinosine leaving behind the intact lesion on the nicked DNA. This chain is Endonuclease V, found in Xanthomonas campestris pv. campestris (strain 8004).